We begin with the raw amino-acid sequence, 196 residues long: ATP-dependent Clp protease proteolytic subunit (196 aa).

Ser96 (nucleophile) is an active-site residue. His121 is a catalytic residue.

It belongs to the peptidase S14 family. Fourteen ClpP subunits assemble into 2 heptameric rings which stack back to back to give a disk-like structure with a central cavity, resembling the structure of eukaryotic proteasomes.

The protein localises to the cytoplasm. The catalysed reaction is Hydrolysis of proteins to small peptides in the presence of ATP and magnesium. alpha-casein is the usual test substrate. In the absence of ATP, only oligopeptides shorter than five residues are hydrolyzed (such as succinyl-Leu-Tyr-|-NHMec, and Leu-Tyr-Leu-|-Tyr-Trp, in which cleavage of the -Tyr-|-Leu- and -Tyr-|-Trp bonds also occurs).. In terms of biological role, cleaves peptides in various proteins in a process that requires ATP hydrolysis. Has a chymotrypsin-like activity. Plays a major role in the degradation of misfolded proteins. This chain is ATP-dependent Clp protease proteolytic subunit, found in Streptococcus pneumoniae (strain 70585).